The chain runs to 185 residues: MINEIKKDAQTRMQKSLESLTHAFTRIRTGKAHPSILGGVMVPYYGADTPLSQVANVTVKDSRTLQVVAFERNMLAAVDKAIQSSGLGFNPTNLGELLLISMPALTEETRKGFTKQARDAAEDARVAVRNIRRDALSQLKDLVKDKEISEDEERRAADDVQKLTDKFVADIEVAVKQKEADLMAV.

The protein belongs to the RRF family.

The protein resides in the cytoplasm. Responsible for the release of ribosomes from messenger RNA at the termination of protein biosynthesis. May increase the efficiency of translation by recycling ribosomes from one round of translation to another. This chain is Ribosome-recycling factor, found in Pseudomonas syringae pv. tomato (strain ATCC BAA-871 / DC3000).